Reading from the N-terminus, the 453-residue chain is Homogentisate 1,2-dioxygenase (453 aa).

H304 serves as the catalytic Proton acceptor. Fe cation is bound by residues H347 and E353. Residues Y362 and H383 each contribute to the homogentisate site. Residue H383 participates in Fe cation binding.

The protein belongs to the homogentisate dioxygenase family. Hexamer; dimer of trimers. Fe cation is required as a cofactor.

The enzyme catalyses homogentisate + O2 = 4-maleylacetoacetate + H(+). It functions in the pathway amino-acid degradation; L-phenylalanine degradation; acetoacetate and fumarate from L-phenylalanine: step 4/6. Functionally, involved in the catabolism of homogentisate (2,5-dihydroxyphenylacetate or 2,5-OH-PhAc), a central intermediate in the degradation of phenylalanine and tyrosine. Catalyzes the oxidative ring cleavage of the aromatic ring of homogentisate to yield maleylacetoacetate. This chain is Homogentisate 1,2-dioxygenase, found in Sinorhizobium fredii (strain NBRC 101917 / NGR234).